The sequence spans 192 residues: Potassium-transporting ATPase KdpC subunit (192 aa).

A helical transmembrane segment spans residues 7–27 (PLIVIFAVLTAVTGLAYPAVM).

Belongs to the KdpC family. The system is composed of three essential subunits: KdpA, KdpB and KdpC.

Its subcellular location is the cell inner membrane. Part of the high-affinity ATP-driven potassium transport (or Kdp) system, which catalyzes the hydrolysis of ATP coupled with the electrogenic transport of potassium into the cytoplasm. This subunit acts as a catalytic chaperone that increases the ATP-binding affinity of the ATP-hydrolyzing subunit KdpB by the formation of a transient KdpB/KdpC/ATP ternary complex. In Paraburkholderia phytofirmans (strain DSM 17436 / LMG 22146 / PsJN) (Burkholderia phytofirmans), this protein is Potassium-transporting ATPase KdpC subunit.